We begin with the raw amino-acid sequence, 423 residues long: Glucoside xylosyltransferase 2 (423 aa).

Topologically, residues 1–6 are cytoplasmic; the sequence is MRFRWK. The chain crosses the membrane as a helical; Signal-anchor for type II membrane protein span at residues 7-26; that stretch reads FFGSLLCVTGLLLVLYRQLG. The Lumenal portion of the chain corresponds to 27-423; that stretch reads NVPQPPPGPA…RVVVHIRSDV (397 aa). Residues 60 to 85 are disordered; that stretch reads RRDARQGGKKKTNWNNVRAPEQKPNP. N-linked (GlcNAc...) asparagine glycans are attached at residues asparagine 215 and asparagine 256.

This sequence belongs to the glycosyltransferase 8 family.

It localises to the membrane. The enzyme catalyses 3-O-(beta-D-glucosyl)-L-seryl-[EGF-like domain protein] + UDP-alpha-D-xylose = 3-O-[alpha-D-xylosyl-(1-&gt;3)-beta-D-glucosyl]-L-seryl-[EGF-like domain protein] + UDP + H(+). Functionally, glycosyltransferase which elongates the O-linked glucose attached to EGF-like repeats in the extracellular domain of Notch proteins by catalyzing the addition of xylose. This is Glucoside xylosyltransferase 2 (gxylt2) from Xenopus laevis (African clawed frog).